The following is a 491-amino-acid chain: Glycogen synthase 1 (491 aa).

Lys-15 lines the ADP-alpha-D-glucose pocket.

It belongs to the glycosyltransferase 1 family. Bacterial/plant glycogen synthase subfamily.

The catalysed reaction is [(1-&gt;4)-alpha-D-glucosyl](n) + ADP-alpha-D-glucose = [(1-&gt;4)-alpha-D-glucosyl](n+1) + ADP + H(+). It participates in glycan biosynthesis; glycogen biosynthesis. Synthesizes alpha-1,4-glucan chains using ADP-glucose. The sequence is that of Glycogen synthase 1 from Synechococcus sp. (strain JA-2-3B'a(2-13)) (Cyanobacteria bacterium Yellowstone B-Prime).